The following is a 180-amino-acid chain: Acireductone dioxygenase (180 aa).

4 residues coordinate Fe(2+): histidine 97, histidine 99, glutamate 103, and histidine 141. Residues histidine 97, histidine 99, glutamate 103, and histidine 141 each contribute to the Ni(2+) site.

Belongs to the acireductone dioxygenase (ARD) family. In terms of assembly, monomer. Fe(2+) is required as a cofactor. Requires Ni(2+) as cofactor.

It catalyses the reaction 1,2-dihydroxy-5-(methylsulfanyl)pent-1-en-3-one + O2 = 3-(methylsulfanyl)propanoate + CO + formate + 2 H(+). The catalysed reaction is 1,2-dihydroxy-5-(methylsulfanyl)pent-1-en-3-one + O2 = 4-methylsulfanyl-2-oxobutanoate + formate + 2 H(+). Its pathway is amino-acid biosynthesis; L-methionine biosynthesis via salvage pathway; L-methionine from S-methyl-5-thio-alpha-D-ribose 1-phosphate: step 5/6. Catalyzes 2 different reactions between oxygen and the acireductone 1,2-dihydroxy-3-keto-5-methylthiopentene (DHK-MTPene) depending upon the metal bound in the active site. Fe-containing acireductone dioxygenase (Fe-ARD) produces formate and 2-keto-4-methylthiobutyrate (KMTB), the alpha-ketoacid precursor of methionine in the methionine recycle pathway. Ni-containing acireductone dioxygenase (Ni-ARD) produces methylthiopropionate, carbon monoxide and formate, and does not lie on the methionine recycle pathway. This chain is Acireductone dioxygenase, found in Acidiphilium cryptum (strain JF-5).